A 284-amino-acid polypeptide reads, in one-letter code: Polyamine aminopropyltransferase (284 aa).

The PABS domain occupies 2–237 (ELWYTEQHTE…GHWLFGFASK (236 aa)). Q31 is an S-methyl-5'-thioadenosine binding site. H62 and D86 together coordinate spermidine. Residues E106 and 137–138 (DG) contribute to the S-methyl-5'-thioadenosine site. D155 acts as the Proton acceptor in catalysis. 155–158 (DSTD) is a binding site for spermidine. P162 contacts S-methyl-5'-thioadenosine.

The protein belongs to the spermidine/spermine synthase family. In terms of assembly, homodimer or homotetramer.

It localises to the cytoplasm. The enzyme catalyses S-adenosyl 3-(methylsulfanyl)propylamine + putrescine = S-methyl-5'-thioadenosine + spermidine + H(+). Its pathway is amine and polyamine biosynthesis; spermidine biosynthesis; spermidine from putrescine: step 1/1. In terms of biological role, catalyzes the irreversible transfer of a propylamine group from the amino donor S-adenosylmethioninamine (decarboxy-AdoMet) to putrescine (1,4-diaminobutane) to yield spermidine. This chain is Polyamine aminopropyltransferase, found in Clostridium beijerinckii (strain ATCC 51743 / NCIMB 8052) (Clostridium acetobutylicum).